The sequence spans 1226 residues: Double-stranded RNA-specific adenosine deaminase (1226 aa).

An Asymmetric dimethylarginine modification is found at Arg26. In terms of domain architecture, Z-binding 1 spans 133–199; that stretch reads LSIYQDQEQR…GTPPLWKIAV (67 aa). The interval 133–202 is interaction with Z-DNA; the sequence is LSIYQDQEQR…PLWKIAVSTQ (70 aa). Disordered regions lie at residues 208–238 and 258–286; these read SGVV…TSVS and GVVR…STSA. Position 285 is a phosphoserine (Ser285). Residues 293-357 enclose the Z-binding 2 domain; the sequence is FLDMAEIKEK…TTPPIWHLTD (65 aa). Glycyl lysine isopeptide (Lys-Gly) (interchain with G-Cter in SUMO2) cross-links involve residues Lys384 and Lys408. Residue Lys418 forms a Glycyl lysine isopeptide (Lys-Gly) (interchain with G-Cter in SUMO); alternate linkage. A Glycyl lysine isopeptide (Lys-Gly) (interchain with G-Cter in SUMO1); alternate cross-link involves residue Lys418. Lys418 participates in a covalent cross-link: Glycyl lysine isopeptide (Lys-Gly) (interchain with G-Cter in SUMO2); alternate. Phosphoserine is present on Ser481. One can recognise a DRBM 1 domain in the interval 503–571; it reads NPISGLLEYA…AMKAMTILLE (69 aa). Residues 574-597 show a composition bias toward basic and acidic residues; it reads KAKDSGKSEESSHYSTEKESEKTA. The disordered stretch occupies residues 574 to 610; sequence KAKDSGKSEESSHYSTEKESEKTAESQTPTPSATSFF. Lys580 is covalently cross-linked (Glycyl lysine isopeptide (Lys-Gly) (interchain with G-Cter in SUMO2)). A compositionally biased stretch (polar residues) spans 600–610; it reads QTPTPSATSFF. Phosphothreonine is present on residues Thr601 and Thr603. Residues Ser614, Ser629, and Ser636 each carry the phosphoserine modification. Residues 614–682 form the DRBM 2 domain; it reads SPVTTLLECM…AEEAMKALHG (69 aa). The tract at residues 716 to 725 is N-terminal extension of DRBM 3 and constituent of a bi-partite nuclear localization signal; it reads IGELVRYLNT. Residues 726–794 form the DRBM 3 domain; it reads NPVGGLLEYA…ADAALRVLIG (69 aa). The interval 795–801 is C-terminal extension of DRBM 3 and constituent of a bi-partite nuclear localization signal; the sequence is ENEKAER. Thr808 carries the post-translational modification Phosphothreonine. Phosphoserine occurs at positions 814, 823, and 825. A Glycyl lysine isopeptide (Lys-Gly) (interchain with G-Cter in SUMO2) cross-link involves residue Lys875. One can recognise an A to I editase domain in the interval 886 to 1221; sequence SLGTGNRCVK…ISKPQEEKNF (336 aa). His910 provides a ligand contact to Zn(2+). The Proton donor role is filled by Glu912. Zn(2+) is bound by residues Cys966 and Cys1036.

Homodimer. Homodimerization is essential for its catalytic activity. Isoform 5 can form heterodimers with ADARB1/ADAR2. Isoform 1 interacts with ILF2/NF45 and ILF3/NF90. Binding to ILF3/NF90 up-regulates ILF3-mediated gene expression. Isoform 1 and isoform 5 (via DRBM 3 domain) interact with TNPO1. Isoform 5 (via DRBM domains) interacts with XPO5. Isoform 1 and isoform 5 can interact with EIF2AK2/PKR and UPF1. In terms of processing, sumoylation reduces RNA-editing activity. As to expression, ubiquitously expressed, highest levels were found in brain and lung. Isoform 5 is expressed at higher levels in astrocytomas as compared to normal brain tissue and expression increases strikingly with the severity of the tumor, being higher in the most aggressive tumors.

It localises to the cytoplasm. The protein localises to the nucleus. The protein resides in the nucleolus. It carries out the reaction adenosine in double-stranded RNA + H2O + H(+) = inosine in double-stranded RNA + NH4(+). Functionally, catalyzes the hydrolytic deamination of adenosine to inosine in double-stranded RNA (dsRNA) referred to as A-to-I RNA editing. This may affect gene expression and function in a number of ways that include mRNA translation by changing codons and hence the amino acid sequence of proteins since the translational machinery read the inosine as a guanosine; pre-mRNA splicing by altering splice site recognition sequences; RNA stability by changing sequences involved in nuclease recognition; genetic stability in the case of RNA virus genomes by changing sequences during viral RNA replication; and RNA structure-dependent activities such as microRNA production or targeting or protein-RNA interactions. Can edit both viral and cellular RNAs and can edit RNAs at multiple sites (hyper-editing) or at specific sites (site-specific editing). Its cellular RNA substrates include: bladder cancer-associated protein (BLCAP), neurotransmitter receptors for glutamate (GRIA2) and serotonin (HTR2C) and GABA receptor (GABRA3). Site-specific RNA editing of transcripts encoding these proteins results in amino acid substitutions which consequently alters their functional activities. Exhibits low-level editing at the GRIA2 Q/R site, but edits efficiently at the R/G site and HOTSPOT1. Its viral RNA substrates include: hepatitis C virus (HCV), vesicular stomatitis virus (VSV), measles virus (MV), hepatitis delta virus (HDV), and human immunodeficiency virus type 1 (HIV-1). Exhibits either a proviral (HDV, MV, VSV and HIV-1) or an antiviral effect (HCV) and this can be editing-dependent (HDV and HCV), editing-independent (VSV and MV) or both (HIV-1). Impairs HCV replication via RNA editing at multiple sites. Enhances the replication of MV, VSV and HIV-1 through an editing-independent mechanism via suppression of EIF2AK2/PKR activation and function. Stimulates both the release and infectivity of HIV-1 viral particles by an editing-dependent mechanism where it associates with viral RNAs and edits adenosines in the 5'UTR and the Rev and Tat coding sequence. Can enhance viral replication of HDV via A-to-I editing at a site designated as amber/W, thereby changing an UAG amber stop codon to an UIG tryptophan (W) codon that permits synthesis of the large delta antigen (L-HDAg) which has a key role in the assembly of viral particles. However, high levels of ADAR1 inhibit HDV replication. This is Double-stranded RNA-specific adenosine deaminase (ADAR) from Homo sapiens (Human).